Reading from the N-terminus, the 889-residue chain is Cytoplasmic aconitate hydratase (889 aa).

Residues glutamine 86 and 205–207 (DSH) contribute to the substrate site. [4Fe-4S] cluster contacts are provided by cysteine 437, cysteine 503, and cysteine 506. Substrate contacts are provided by residues arginine 536, arginine 541, arginine 699, and 779-780 (SR).

The protein belongs to the aconitase/IPM isomerase family. [4Fe-4S] cluster is required as a cofactor.

It is found in the cytoplasm. It localises to the cytosol. The enzyme catalyses citrate = D-threo-isocitrate. In terms of biological role, bifunctional iron sensor that switches between 2 activities depending on iron availability. Iron deprivation, promotes its mRNA binding activity through which it regulates the expression of genes involved in iron uptake, sequestration and utilization. Binds to iron-responsive elements (IRES) in the untranslated region of target mRNAs preventing for instance the translation of ferritin and aminolevulinic acid synthase and stabilizing the transferrin receptor mRNA. Functionally, conversely, when cellular iron levels are high, binds a 4Fe-4S cluster which precludes RNA binding activity and promotes the aconitase activity, the isomerization of citrate to isocitrate via cis-aconitate. The sequence is that of Cytoplasmic aconitate hydratase (ACO1) from Gallus gallus (Chicken).